The chain runs to 228 residues: Deoxyribose-phosphate aldolase (228 aa).

The active-site Proton donor/acceptor is Asp-93. Lys-159 acts as the Schiff-base intermediate with acetaldehyde in catalysis. Lys-188 (proton donor/acceptor) is an active-site residue.

Belongs to the DeoC/FbaB aldolase family. DeoC type 1 subfamily.

The protein localises to the cytoplasm. It carries out the reaction 2-deoxy-D-ribose 5-phosphate = D-glyceraldehyde 3-phosphate + acetaldehyde. It participates in carbohydrate degradation; 2-deoxy-D-ribose 1-phosphate degradation; D-glyceraldehyde 3-phosphate and acetaldehyde from 2-deoxy-alpha-D-ribose 1-phosphate: step 2/2. Functionally, catalyzes a reversible aldol reaction between acetaldehyde and D-glyceraldehyde 3-phosphate to generate 2-deoxy-D-ribose 5-phosphate. This Carboxydothermus hydrogenoformans (strain ATCC BAA-161 / DSM 6008 / Z-2901) protein is Deoxyribose-phosphate aldolase.